A 255-amino-acid polypeptide reads, in one-letter code: Thiazole synthase (255 aa).

Residue Lys95 is the Schiff-base intermediate with DXP of the active site. 1-deoxy-D-xylulose 5-phosphate contacts are provided by residues Gly156, 182–183 (AG), and 204–205 (NT).

The protein belongs to the ThiG family. Homotetramer. Forms heterodimers with either ThiH or ThiS.

The protein resides in the cytoplasm. It catalyses the reaction [ThiS sulfur-carrier protein]-C-terminal-Gly-aminoethanethioate + 2-iminoacetate + 1-deoxy-D-xylulose 5-phosphate = [ThiS sulfur-carrier protein]-C-terminal Gly-Gly + 2-[(2R,5Z)-2-carboxy-4-methylthiazol-5(2H)-ylidene]ethyl phosphate + 2 H2O + H(+). The protein operates within cofactor biosynthesis; thiamine diphosphate biosynthesis. In terms of biological role, catalyzes the rearrangement of 1-deoxy-D-xylulose 5-phosphate (DXP) to produce the thiazole phosphate moiety of thiamine. Sulfur is provided by the thiocarboxylate moiety of the carrier protein ThiS. In vitro, sulfur can be provided by H(2)S. The protein is Thiazole synthase of Aeromonas salmonicida (strain A449).